The primary structure comprises 43 residues: uncharacterized protein (43 aa).

Low complexity predominate over residues 1–37 (MIIKNNNNNNNNNNNNNNNNNNNNNNNNNNNNNNNNN). The tract at residues 1-43 (MIIKNNNNNNNNNNNNNNNNNNNNNNNNNNNNNNNNNIEIIIK) is disordered.

This is an uncharacterized protein from Dictyostelium discoideum (Social amoeba).